A 314-amino-acid chain; its full sequence is Serine protease 46 (314 aa).

A Peptidase S1 domain is found at 44–281; it reads VVNGKAVEVG…FTQWIKRQIG (238 aa). C69 and C85 are oxidised to a cystine. Active-site charge relay system residues include H84 and D130. Cystine bridges form between C164–C239, C197–C219, and C229–C257. The active-site Charge relay system is S233. The chain crosses the membrane as a helical span at residues 293–313; sequence FLSPFILTGYILLVSLGSLWL.

The protein belongs to the peptidase S1 family.

Its subcellular location is the membrane. The chain is Serine protease 46 (Prss46) from Mus musculus (Mouse).